Reading from the N-terminus, the 66-residue chain is Large ribosomal subunit protein uL29 (66 aa).

This sequence belongs to the universal ribosomal protein uL29 family.

This Geobacillus thermodenitrificans (strain NG80-2) protein is Large ribosomal subunit protein uL29.